A 609-amino-acid polypeptide reads, in one-letter code: MSTGFNAQSFLRTVTSSAGVYRMYDVKGDVIYVGKAKDLKKRLSSYFRKNLGNVKTQALVSHIHHIDVTLTHSETDALLLENDYIKQYMPKYNVLLRDDKSYPYILLSQHEHPRLAYHRGPQREKGHYFGPYPNGGAVRESLHLMQKLFPIRQCDDLYYKSRTRPCLQYQLSRCSAPCVGKVSNAEYDEQVKLASLFLKGKDKQVISELVAKMEEAAEQQAYEQAARFRDQIMALRRVAEQQEVSGNTGDMDVIGVHYASGIACFHLLFIREGKIFGSRSYYPTVPAQTDIEEVLRSFLLQFYLNADIQRTIPKEVVISHHFEELHELEAAVSEALNKKFSIKTNVRADRASFLRLAITNATNAVMTRLSHKNTVEQRFVLLEEILELNAPIQRMECFDISHTMGESTVASCVVFNREGPHKAEYRRYNIEGITPGDDYAAMKQAISRRFDKIDASGKIPDILFIDGGLGQLRIAQQIVDEKFVNLDKAPQLIGVAKGESRKPGLETLIFGDTETSFSLEDDSPALHLIQHIRDESHRFAITGHRNRRQKTRNTSTLESIPGIGPKRRKALLQHLGGLQEVKGASVAELAKVPGISIEMAQTIHDALRG.

In terms of domain architecture, GIY-YIG spans 16–94; it reads SSAGVYRMYD…IKQYMPKYNV (79 aa). The region spanning 203 to 238 is the UVR domain; sequence KQVISELVAKMEEAAEQQAYEQAARFRDQIMALRRV.

It belongs to the UvrC family. In terms of assembly, interacts with UvrB in an incision complex.

It localises to the cytoplasm. Its function is as follows. The UvrABC repair system catalyzes the recognition and processing of DNA lesions. UvrC both incises the 5' and 3' sides of the lesion. The N-terminal half is responsible for the 3' incision and the C-terminal half is responsible for the 5' incision. This chain is UvrABC system protein C, found in Shewanella oneidensis (strain ATCC 700550 / JCM 31522 / CIP 106686 / LMG 19005 / NCIMB 14063 / MR-1).